Reading from the N-terminus, the 1020-residue chain is Tetrathionate reductase subunit A (1020 aa).

The segment at residues 1–33 (MANLTRRQWLKVGLAVGGMVTFGLSYRDVAKRA) is a signal peptide (tat-type signal). Residues 71-154 (QTIAMTQCFG…TLLESLYSPL (84 aa)) form the 4Fe-4S Mo/W bis-MGD-type domain. [4Fe-4S] cluster contacts are provided by Cys78, Cys81, Cys85, and Cys140.

It belongs to the prokaryotic molybdopterin-containing oxidoreductase family. As to quaternary structure, probably composed of three subunits: TtrA, TtrB and TtrC. [4Fe-4S] cluster is required as a cofactor. The cofactor is Mo-bis(molybdopterin guanine dinucleotide). Post-translationally, predicted to be exported by the Tat system. The position of the signal peptide cleavage has not been experimentally proven.

The protein localises to the periplasm. It localises to the cell inner membrane. In terms of biological role, part of a membrane-bound tetrathionate reductase that catalyzes the reduction of tetrathionate to thiosulfate. TtrA is the catalytic subunit. During mice infection, the ability to use tetrathionate as an electron acceptor is a growth advantage for S.typhimurium over the competing microbiota in the lumen of the inflamed gut. This Salmonella typhimurium (strain LT2 / SGSC1412 / ATCC 700720) protein is Tetrathionate reductase subunit A (ttrA).